A 652-amino-acid chain; its full sequence is UvrABC system protein C (652 aa).

The 80-residue stretch at 37–116 (KSSGCYLFKD…IKTNKPYFNI (80 aa)) folds into the GIY-YIG domain. Positions 226–261 (DDLEIFLQKKMLQFSNDLDYENAAKIRDQISGLKLL) constitute a UVR domain.

It belongs to the UvrC family. As to quaternary structure, interacts with UvrB in an incision complex.

The protein resides in the cytoplasm. Functionally, the UvrABC repair system catalyzes the recognition and processing of DNA lesions. UvrC both incises the 5' and 3' sides of the lesion. The N-terminal half is responsible for the 3' incision and the C-terminal half is responsible for the 5' incision. The polypeptide is UvrABC system protein C (Prochlorococcus marinus (strain MIT 9312)).